The primary structure comprises 372 residues: Putative glutamate--cysteine ligase 2 (372 aa).

The protein belongs to the glutamate--cysteine ligase type 2 family. YbdK subfamily. In terms of assembly, homodimer.

It carries out the reaction L-cysteine + L-glutamate + ATP = gamma-L-glutamyl-L-cysteine + ADP + phosphate + H(+). Its function is as follows. ATP-dependent carboxylate-amine ligase which exhibits weak glutamate--cysteine ligase activity. The protein is Putative glutamate--cysteine ligase 2 (ybdK) of Salmonella typhimurium (strain LT2 / SGSC1412 / ATCC 700720).